Reading from the N-terminus, the 108-residue chain is UPF0145 protein AF_0869 (108 aa).

Belongs to the UPF0145 family.

This is UPF0145 protein AF_0869 from Archaeoglobus fulgidus (strain ATCC 49558 / DSM 4304 / JCM 9628 / NBRC 100126 / VC-16).